Consider the following 52-residue polypeptide: Small, acid-soluble spore protein K (52 aa).

The segment at 1-52 (MGKQAEFWSESKNNSKIDGQPKAKSRFASKRPNGTINTHPQERMRAANQQEE) is disordered.

This sequence belongs to the SspK family.

It is found in the spore core. In Bacillus anthracis (strain A0248), this protein is Small, acid-soluble spore protein K.